The chain runs to 453 residues: Alpha-galacturonidase (453 aa).

11 to 72 (IKIAYIGGGS…SQWEYKSVDS (62 aa)) lines the NAD(+) pocket. Asparagine 151 is a binding site for substrate. Cysteine 173 is a binding site for Mn(2+). Residue histidine 174 is the Proton donor of the active site. Histidine 209 contacts Mn(2+).

This sequence belongs to the glycosyl hydrolase 4 family. In terms of assembly, homotetramer. It depends on NAD(+) as a cofactor. Mn(2+) is required as a cofactor.

The catalysed reaction is [(1-&gt;4)-alpha-D-galacturonosyl](n) + H2O = alpha-D-galacturonate + [(1-&gt;4)-alpha-D-galacturonosyl](n-1). In terms of biological role, alpha-galacturonidase able to catalyze the hydrolysis of the chromogenic substrate p-nitrophenyl-alpha-D-galacturonic acid (pNPalphaGalUA). It is probable that alpha-1,4-di-galacturonate (GalUA(2)) is the naturally occurring substrate. In Thermoanaerobacter italicus (strain DSM 9252 / Ab9), this protein is Alpha-galacturonidase.